We begin with the raw amino-acid sequence, 261 residues long: Probable pectin methylesterase CGR2 (261 aa).

Residues 1–35 (MARRQVGSTRRVGDGGSFPFAGALHSKSRSSPLLS) are Cytoplasmic-facing. Residues 36 to 56 (ICLVLVGACLLIGYAYSGPGI) form a helical membrane-spanning segment. Residues 57–261 (FKSIKEVSKV…CQVFHLKPLH (205 aa)) are Lumenal-facing. The N-linked (GlcNAc...) asparagine glycan is linked to Asn174.

It belongs to the class I-like SAM-binding methyltransferase superfamily.

The protein resides in the golgi apparatus membrane. Together with CGR3, required for homogalacturonan pectins (HG) methylesterification in the Golgi apparatus prior to integration into cell walls, essential for general growth and development. Promotes rosette growth. Impacts carbon (C) partitioning, photosynthesis and respiration efficiency by influencing leaf mesophyll cell walls morphology and physiology; pectin methylesterification modulates both expansion and positioning of cells in leaves, probably by changing cell walls plasticity. The polypeptide is Probable pectin methylesterase CGR2 (Arabidopsis thaliana (Mouse-ear cress)).